The following is a 787-amino-acid chain: Protocadherin beta-15 (787 aa).

The first 26 residues, 1–26 (MEPAGERFPEQRQVLILLLLLEVTLA), serve as a signal peptide directing secretion. At 27–690 (GWEPRRYSVM…AQADSLTVYL (664 aa)) the chain is on the extracellular side. Cadherin domains lie at 35–133 (VMEE…SPEF), 138–242 (ITLK…APEF), 247–347 (YEVQ…FPEL), 352–451 (LTSP…APAF), and 456–561 (YTLF…SPFV). 2 N-linked (GlcNAc...) asparagine glycosylation sites follow: Asn-418 and Asn-436. A glycan (N-linked (GlcNAc...) asparagine) is linked at Asn-567. A Cadherin 6 domain is found at 568–671 (GSAPCTELVP…LVDGFSQPYL (104 aa)). Residues 691–711 (VVALASVSSLFLFSVLLFVAV) form a helical membrane-spanning segment. The Cytoplasmic segment spans residues 712–787 (RLCRRSRAAS…DSRRKSEFLE (76 aa)).

The protein resides in the cell membrane. In terms of biological role, potential calcium-dependent cell-adhesion protein. May be involved in the establishment and maintenance of specific neuronal connections in the brain. This is Protocadherin beta-15 (PCDHB15) from Pan troglodytes (Chimpanzee).